A 457-amino-acid chain; its full sequence is D-hydantoinase (457 aa).

The Zn(2+) site is built by histidine 57 and histidine 59. Serine 69 is subject to Phosphoserine. A Zn(2+)-binding site is contributed by lysine 148. Lysine 148 bears the N6-carboxylysine mark. Tyrosine 153 contacts substrate. Residues histidine 181 and histidine 237 each contribute to the Zn(2+) site. A substrate-binding site is contributed by threonine 286. Residue aspartate 313 coordinates Zn(2+). Asparagine 335 is a substrate binding site.

It belongs to the metallo-dependent hydrolases superfamily. Hydantoinase/dihydropyrimidinase family. As to quaternary structure, homotetramer. Zn(2+) serves as cofactor. Post-translationally, carboxylation allows a single lysine to coordinate two zinc ions.

Functionally, catalyzes the stereospecific hydrolysis of the cyclic amide bond of D-hydantoin derivatives. The chain is D-hydantoinase (hyuA) from Rhizobium radiobacter (Agrobacterium tumefaciens).